A 294-amino-acid polypeptide reads, in one-letter code: ATP synthase gamma chain (294 aa).

The protein belongs to the ATPase gamma chain family. F-type ATPases have 2 components, CF(1) - the catalytic core - and CF(0) - the membrane proton channel. CF(1) has five subunits: alpha(3), beta(3), gamma(1), delta(1), epsilon(1). CF(0) has three main subunits: a, b and c.

The protein localises to the cell inner membrane. In terms of biological role, produces ATP from ADP in the presence of a proton gradient across the membrane. The gamma chain is believed to be important in regulating ATPase activity and the flow of protons through the CF(0) complex. The chain is ATP synthase gamma chain from Campylobacter jejuni subsp. jejuni serotype O:2 (strain ATCC 700819 / NCTC 11168).